The following is a 360-amino-acid chain: Phosphoserine aminotransferase (360 aa).

Residue Arg-41 participates in L-glutamate binding. Positions 101, 152, 172, and 195 each coordinate pyridoxal 5'-phosphate. An N6-(pyridoxal phosphate)lysine modification is found at Lys-196. Pyridoxal 5'-phosphate is bound at residue 237 to 238 (NT).

It belongs to the class-V pyridoxal-phosphate-dependent aminotransferase family. SerC subfamily. As to quaternary structure, homodimer. The cofactor is pyridoxal 5'-phosphate.

The protein localises to the cytoplasm. It carries out the reaction O-phospho-L-serine + 2-oxoglutarate = 3-phosphooxypyruvate + L-glutamate. The enzyme catalyses 4-(phosphooxy)-L-threonine + 2-oxoglutarate = (R)-3-hydroxy-2-oxo-4-phosphooxybutanoate + L-glutamate. Its pathway is amino-acid biosynthesis; L-serine biosynthesis; L-serine from 3-phospho-D-glycerate: step 2/3. The protein operates within cofactor biosynthesis; pyridoxine 5'-phosphate biosynthesis; pyridoxine 5'-phosphate from D-erythrose 4-phosphate: step 3/5. Its function is as follows. Catalyzes the reversible conversion of 3-phosphohydroxypyruvate to phosphoserine and of 3-hydroxy-2-oxo-4-phosphonooxybutanoate to phosphohydroxythreonine. The chain is Phosphoserine aminotransferase from Burkholderia vietnamiensis (strain G4 / LMG 22486) (Burkholderia cepacia (strain R1808)).